A 178-amino-acid polypeptide reads, in one-letter code: Thymidine kinase (178 aa).

13–20 contacts ATP; that stretch reads GPMFAGKS. E85 (proton acceptor) is an active-site residue. Substrate is bound at residue F115. 2 residues coordinate Zn(2+): C140 and C143. Substrate is bound at residue 159–163; sequence IEVIG. Zn(2+)-binding residues include C172 and C175.

Belongs to the thymidine kinase family.

It catalyses the reaction thymidine + ATP = dTMP + ADP + H(+). The chain is Thymidine kinase (TK) from Oryctolagus cuniculus (Rabbit).